Here is a 106-residue protein sequence, read N- to C-terminus: Nucleoid-associated protein RPB_0667 (106 aa).

Belongs to the YbaB/EbfC family. Homodimer.

The protein resides in the cytoplasm. The protein localises to the nucleoid. Its function is as follows. Binds to DNA and alters its conformation. May be involved in regulation of gene expression, nucleoid organization and DNA protection. This is Nucleoid-associated protein RPB_0667 from Rhodopseudomonas palustris (strain HaA2).